The primary structure comprises 142 residues: Large ribosomal subunit protein uL11 (142 aa).

The protein belongs to the universal ribosomal protein uL11 family. As to quaternary structure, part of the ribosomal stalk of the 50S ribosomal subunit. Interacts with L10 and the large rRNA to form the base of the stalk. L10 forms an elongated spine to which L12 dimers bind in a sequential fashion forming a multimeric L10(L12)X complex. In terms of processing, one or more lysine residues are methylated.

Forms part of the ribosomal stalk which helps the ribosome interact with GTP-bound translation factors. The sequence is that of Large ribosomal subunit protein uL11 from Mycobacterium sp. (strain MCS).